The primary structure comprises 324 residues: Phospho-N-acetylmuramoyl-pentapeptide-transferase (324 aa).

The next 10 helical transmembrane spans lie at 9–29, 53–73, 77–97, 117–137, 147–167, 176–196, 201–221, 227–247, 253–273, and 304–324; these read TFAV…PFLV, TMGA…FSFI, VSAA…LGFL, FLGQ…NDFA, IEVD…VGFS, LDGL…VIAF, MDVA…LLFN, IFMG…ISIL, LLLL…LQVF, and VLTF…VVIF.

The protein belongs to the glycosyltransferase 4 family. MraY subfamily. Requires Mg(2+) as cofactor.

Its subcellular location is the cell membrane. It catalyses the reaction UDP-N-acetyl-alpha-D-muramoyl-L-alanyl-gamma-D-glutamyl-meso-2,6-diaminopimeloyl-D-alanyl-D-alanine + di-trans,octa-cis-undecaprenyl phosphate = di-trans,octa-cis-undecaprenyl diphospho-N-acetyl-alpha-D-muramoyl-L-alanyl-D-glutamyl-meso-2,6-diaminopimeloyl-D-alanyl-D-alanine + UMP. Its pathway is cell wall biogenesis; peptidoglycan biosynthesis. Catalyzes the initial step of the lipid cycle reactions in the biosynthesis of the cell wall peptidoglycan: transfers peptidoglycan precursor phospho-MurNAc-pentapeptide from UDP-MurNAc-pentapeptide onto the lipid carrier undecaprenyl phosphate, yielding undecaprenyl-pyrophosphoryl-MurNAc-pentapeptide, known as lipid I. The sequence is that of Phospho-N-acetylmuramoyl-pentapeptide-transferase from Listeria monocytogenes serovar 1/2a (strain ATCC BAA-679 / EGD-e).